We begin with the raw amino-acid sequence, 127 residues long: Glycine cleavage system H protein (127 aa).

In terms of domain architecture, Lipoyl-binding spans 24 to 106 (TATIGITDYA…YAEGWMLKLK (83 aa)). Position 65 is an N6-lipoyllysine (Lys65).

It belongs to the GcvH family. In terms of assembly, the glycine cleavage system is composed of four proteins: P, T, L and H. (R)-lipoate serves as cofactor.

In terms of biological role, the glycine cleavage system catalyzes the degradation of glycine. The H protein shuttles the methylamine group of glycine from the P protein to the T protein. This Opitutus terrae (strain DSM 11246 / JCM 15787 / PB90-1) protein is Glycine cleavage system H protein.